An 836-amino-acid chain; its full sequence is MPINYTNLLLMLRECKNFRCLLQVHGSLIVSGLKPHNQLINAYSLFQRQDLSRVIFDSVRDPGVVLWNSMIRGYTRAGLHREALGFFGYMSEEKGIDPDKYSFTFALKACAGSMDFKKGLRIHDLIAEMGLESDVYIGTALVEMYCKARDLVSARQVFDKMHVKDVVTWNTMVSGLAQNGCSSAALLLFHDMRSCCVDIDHVSLYNLIPAVSKLEKSDVCRCLHGLVIKKGFIFAFSSGLIDMYCNCADLYAAESVFEEVWRKDESSWGTMMAAYAHNGFFEEVLELFDLMRNYDVRMNKVAAASALQAAAYVGDLVKGIAIHDYAVQQGLIGDVSVATSLMSMYSKCGELEIAEQLFINIEDRDVVSWSAMIASYEQAGQHDEAISLFRDMMRIHIKPNAVTLTSVLQGCAGVAASRLGKSIHCYAIKADIESELETATAVISMYAKCGRFSPALKAFERLPIKDAVAFNALAQGYTQIGDANKAFDVYKNMKLHGVCPDSRTMVGMLQTCAFCSDYARGSCVYGQIIKHGFDSECHVAHALINMFTKCDALAAAIVLFDKCGFEKSTVSWNIMMNGYLLHGQAEEAVATFRQMKVEKFQPNAVTFVNIVRAAAELSALRVGMSVHSSLIQCGFCSQTPVGNSLVDMYAKCGMIESSEKCFIEISNKYIVSWNTMLSAYAAHGLASCAVSLFLSMQENELKPDSVSFLSVLSACRHAGLVEEGKRIFEEMGERHKIEAEVEHYACMVDLLGKAGLFGEAVEMMRRMRVKTSVGVWGALLNSSRMHCNLWLSNAALCQLVKLEPLNPSHYSQDRRLGEVNNVSRIKKVPACSWIEV.

PPR repeat units lie at residues 1–35 (MPINYTNLLLMLRECKNFRCLLQVHGSLIVSGLKP), 36–62 (HNQLINAYSLFQRQDLSRVIFDSVRDP), 63–98 (GVVLWNSMIRGYTRAGLHREALGFFGYMSEEKGIDP), 99–133 (DKYSFTFALKACAGSMDFKKGLRIHDLIAEMGLES), 134–164 (DVYIGTALVEMYCKARDLVSARQVFDKMHVK), 165–199 (DVVTWNTMVSGLAQNGCSSAALLLFHDMRSCCVDI), 200–230 (DHVSLYNLIPAVSKLEKSDVCRCLHGLVIKK), 233–263 (IFAFSSGLIDMYCNCADLYAAESVFEEVWRK), 264–298 (DESSWGTMMAAYAHNGFFEEVLELFDLMRNYDVRM), 299–333 (NKVAAASALQAAAYVGDLVKGIAIHDYAVQQGLIG), 334–364 (DVSVATSLMSMYSKCGELEIAEQLFINIEDR), 365–399 (DVVSWSAMIASYEQAGQHDEAISLFRDMMRIHIKP), 400–434 (NAVTLTSVLQGCAGVAASRLGKSIHCYAIKADIES), 435–465 (ELETATAVISMYAKCGRFSPALKAFERLPIK), 466–500 (DAVAFNALAQGYTQIGDANKAFDVYKNMKLHGVCP), 501–535 (DSRTMVGMLQTCAFCSDYARGSCVYGQIIKHGFDS), 536–566 (ECHVAHALINMFTKCDALAAAIVLFDKCGFE), 568–602 (STVSWNIMMNGYLLHGQAEEAVATFRQMKVEKFQP), 603–637 (NAVTFVNIVRAAAELSALRVGMSVHSSLIQCGFCS), 638–668 (QTPVGNSLVDMYAKCGMIESSEKCFIEISNK), 669–703 (YIVSWNTMLSAYAAHGLASCAVSLFLSMQENELKP), 704–734 (DSVSFLSVLSACRHAGLVEEGKRIFEEMGER), and 740–770 (EVEHYACMVDLLGKAGLFGEAVEMMRRMRVK). Residues 775–836 (VWGALLNSSR…KVPACSWIEV (62 aa)) form a type E motif; degenerate region.

It belongs to the PPR family. PCMP-E subfamily.

The protein is Pentatricopeptide repeat-containing protein At2g39620 (PCMP-E33) of Arabidopsis thaliana (Mouse-ear cress).